A 628-amino-acid chain; its full sequence is (+)-alpha pinene synthase 1, chloroplastic (628 aa).

A chloroplast-targeting transit peptide spans 1-18 (MALVSAVPLNSKLCLCRT). 3 residues coordinate Mg(2+): aspartate 379, aspartate 383, and aspartate 531. Residues 379–383 (DDIYD) carry the DDXXD motif motif.

It belongs to the terpene synthase family. Tpsd subfamily. The cofactor is Mg(2+). Mn(2+) serves as cofactor.

It is found in the plastid. The protein localises to the chloroplast. It carries out the reaction (2E)-geranyl diphosphate = (1R,5R)-alpha-pinene + diphosphate. The protein operates within terpene metabolism; oleoresin biosynthesis. Its pathway is secondary metabolite biosynthesis; terpenoid biosynthesis. Monoterpene synthase (TPS) involved in the biosynthesis of monoterpene natural products included in conifer oleoresin secretions and volatile emissions; these compounds contribute to biotic and abiotic stress defense against herbivores and pathogens. Catalyzes the conversion of (2E)-geranyl diphosphate (GPP) to (+)-alpha-pinene. This is (+)-alpha pinene synthase 1, chloroplastic from Pinus banksiana (Jack pine).